We begin with the raw amino-acid sequence, 525 residues long: Phosphatidylinositol 4-kinase alpha 2 (525 aa).

The interval 163–278 (SDVRQHIVDG…VKPQACIFKV (116 aa)) is pleckstrin homology (PH) domain conferring phosphoinositide binding specificity. Residues 239 to 509 (VDSGIPLQSA…VCTDAYNKWT (271 aa)) enclose the PI3K/PI4K catalytic domain. The tract at residues 245-251 (LQSAAKV) is G-loop. The tract at residues 373 to 381 (QPKDRHNGN) is catalytic loop. Residues 392-417 (HIDFGFILETSPGGNMRFENAHFKLS) form an activation loop region.

It belongs to the PI3/PI4-kinase family. Type III PI4K subfamily.

The protein resides in the membrane. The enzyme catalyses a 1,2-diacyl-sn-glycero-3-phospho-(1D-myo-inositol) + ATP = a 1,2-diacyl-sn-glycero-3-phospho-(1D-myo-inositol 4-phosphate) + ADP + H(+). Functionally, acts on phosphatidylinositol (PtdIns) in the first committed step in the production of the second messenger inositol-1,4,5,-trisphosphate. The sequence is that of Phosphatidylinositol 4-kinase alpha 2 (PI4KA2) from Arabidopsis thaliana (Mouse-ear cress).